Reading from the N-terminus, the 1015-residue chain is Formate dehydrogenase, nitrate-inducible, major subunit (1015 aa).

The segment at residues 1 to 33 is a signal peptide (tat-type signal); that stretch reads MDVSRRQFFKICAGGMAGTTVAALGFAPKQALA. A 4Fe-4S Mo/W bis-MGD-type domain is found at 43–106; sequence AKEIRNTCTY…GLLDYVNSEN (64 aa). 4 residues coordinate [4Fe-4S] cluster: cysteine 50, cysteine 53, cysteine 57, and cysteine 92. Selenocysteine 196 lines the Mo-bis(molybdopterin guanine dinucleotide) pocket. Position 196 (selenocysteine 196) is a non-standard amino acid, selenocysteine.

This sequence belongs to the prokaryotic molybdopterin-containing oxidoreductase family. In terms of assembly, trimer of heterotrimers, consisting of subunits alpha, beta and gamma. Requires Mo-bis(molybdopterin guanine dinucleotide) as cofactor. It depends on [4Fe-4S] cluster as a cofactor. In terms of processing, exported by the Tat system. The position of the signal peptide cleavage has not been experimentally proven.

The protein localises to the periplasm. The enzyme catalyses a quinone + formate + H(+) = a quinol + CO2. Its function is as follows. Formate dehydrogenase allows E.coli to use formate as major electron donor during anaerobic respiration, when nitrate is used as electron acceptor. The alpha subunit FdnG contains the formate oxidation site. Electrons are transferred from formate to menaquinone in the gamma subunit (FdnI), through the 4Fe-4S clusters in the beta subunit (FdnH). Formate dehydrogenase-N is part of a system that generates proton motive force, together with the dissimilatory nitrate reductase (Nar). In Escherichia coli (strain K12), this protein is Formate dehydrogenase, nitrate-inducible, major subunit (fdnG).